A 101-amino-acid chain; its full sequence is Small ribosomal subunit protein uS14 (101 aa).

This sequence belongs to the universal ribosomal protein uS14 family. In terms of assembly, part of the 30S ribosomal subunit. Contacts proteins S3 and S10.

Its function is as follows. Binds 16S rRNA, required for the assembly of 30S particles and may also be responsible for determining the conformation of the 16S rRNA at the A site. The chain is Small ribosomal subunit protein uS14 from Acinetobacter baumannii (strain SDF).